The sequence spans 71 residues: Small ribosomal subunit protein bS21 (71 aa).

The protein belongs to the bacterial ribosomal protein bS21 family.

The polypeptide is Small ribosomal subunit protein bS21 (Acinetobacter baylyi (strain ATCC 33305 / BD413 / ADP1)).